Consider the following 78-residue polypeptide: Putative defensin-like protein 288 (78 aa).

Positions 1-21 are cleaved as a signal peptide; it reads MSNLRLTIAVFLAALFQTLWW.

It belongs to the DEFL family.

Its subcellular location is the secreted. This Arabidopsis thaliana (Mouse-ear cress) protein is Putative defensin-like protein 288.